Consider the following 349-residue polypeptide: Adenosine deaminase (349 aa).

His25 and His27 together coordinate Zn(2+). Residues His27, Asp29, and Gly182 each coordinate substrate. His209 serves as a coordination point for Zn(2+). The Proton donor role is filled by Glu212. Asp289 provides a ligand contact to Zn(2+).

This sequence belongs to the metallo-dependent hydrolases superfamily. Adenosine and AMP deaminases family. Adenosine deaminase subfamily. Zn(2+) serves as cofactor.

It catalyses the reaction adenosine + H2O + H(+) = inosine + NH4(+). The enzyme catalyses 2'-deoxyadenosine + H2O + H(+) = 2'-deoxyinosine + NH4(+). Catalyzes the hydrolytic deamination of adenosine and 2-deoxyadenosine. This Streptococcus mutans serotype c (strain ATCC 700610 / UA159) protein is Adenosine deaminase.